A 108-amino-acid chain; its full sequence is MALLVHFLPLLALLALWEPKPTQAFVKQHLCGPHLVEALYLVCGERGFFYTPKSRREVEDPQVEQLELGGSPGDLQTLALEVARQKRGIVDQCCTSICSLYQLENYCN.

The N-terminal stretch at 1–24 (MALLVHFLPLLALLALWEPKPTQA) is a signal peptide. Disulfide bonds link C31–C94, C43–C107, and C93–C98. A propeptide spans 57–85 (EVEDPQVEQLELGGSPGDLQTLALEVARQ) (c peptide).

This sequence belongs to the insulin family. Heterodimer of a B chain and an A chain linked by two disulfide bonds.

Its subcellular location is the secreted. In terms of biological role, insulin decreases blood glucose concentration. It increases cell permeability to monosaccharides, amino acids and fatty acids. It accelerates glycolysis, the pentose phosphate cycle, and glycogen synthesis in liver. The polypeptide is Insulin-1 (Ins1) (Mus musculus (Mouse)).